Here is a 639-residue protein sequence, read N- to C-terminus: MTGMPQTPLLDRVNFPSDLKEIDDRDLPELARELRDEMIDAVSKTGGHLGAGLGVVELTIAIHKVFNTPEDRLIFDVGHQCYPHKILTGRRDRIRTLRQEDGLSGFTRRAESEYDDFGAGHSSTSISAGLGMAVAAGLDGSDRKVIAVIGDGSMSAGMAFEALNNAGALDARLIVILNDNDMSIAPPTGAMSAYLARLASGRTYMGFRDFGKKLTAYLGKTIDRAITRAVTHARGYVTGGTLFEELGFYHIGPIDGHSFDHLLPVLRNVRDNQKGPVLIHVVTQKGKGYAPAEAAADKYHGVNKFDVITGAQAKAKPNAPSYTSVFAEALIQEATLDEKIIGVTAAMPNGTGLDKMAELFPSRTFDVGIAEQHAVTFAAGLAADGYKPFCALYSTFLQRGYDQLVHDVAIQSLPVRFPIDRAGFVGADGPTHAGSFDTTFLATLPGMVVMAAADEAELKHMVRTAAAYDEGPISFRYPRGEGVGVEMPARGEILQIGKGRIIKEGTKVALLSFGTRLAECLAAAEDLDAAGLSTTVADARFAKPLDLDLIRQLAAHHEVLVTIEEGSVGGFGAHVLHFMASAGLLDHGPKVRTLTLPDQWVEQAKPETMYANAGLDRAGIVSTVFNALGQRQAGVGFAG.

Residues histidine 79 and 120–122 (GHS) each bind thiamine diphosphate. Residue aspartate 151 participates in Mg(2+) binding. Residues 152–153 (GS), asparagine 180, tyrosine 289, and glutamate 371 contribute to the thiamine diphosphate site. Asparagine 180 serves as a coordination point for Mg(2+).

It belongs to the transketolase family. DXPS subfamily. As to quaternary structure, homodimer. It depends on Mg(2+) as a cofactor. Thiamine diphosphate is required as a cofactor.

It catalyses the reaction D-glyceraldehyde 3-phosphate + pyruvate + H(+) = 1-deoxy-D-xylulose 5-phosphate + CO2. It participates in metabolic intermediate biosynthesis; 1-deoxy-D-xylulose 5-phosphate biosynthesis; 1-deoxy-D-xylulose 5-phosphate from D-glyceraldehyde 3-phosphate and pyruvate: step 1/1. Its function is as follows. Catalyzes the acyloin condensation reaction between C atoms 2 and 3 of pyruvate and glyceraldehyde 3-phosphate to yield 1-deoxy-D-xylulose-5-phosphate (DXP). This chain is 1-deoxy-D-xylulose-5-phosphate synthase, found in Agrobacterium fabrum (strain C58 / ATCC 33970) (Agrobacterium tumefaciens (strain C58)).